The primary structure comprises 329 residues: Glycerol-3-phosphate dehydrogenase [NAD(P)+] (329 aa).

The NADPH site is built by Ser13, Trp14, His34, and Lys105. The sn-glycerol 3-phosphate site is built by Lys105, Gly134, and Ser136. Ala138 serves as a coordination point for NADPH. Residues Lys189, Asp242, Ser252, Arg253, and Asn254 each contribute to the sn-glycerol 3-phosphate site. Catalysis depends on Lys189, which acts as the Proton acceptor. Arg253 serves as a coordination point for NADPH. Positions 277 and 279 each coordinate NADPH.

Belongs to the NAD-dependent glycerol-3-phosphate dehydrogenase family.

Its subcellular location is the cytoplasm. It carries out the reaction sn-glycerol 3-phosphate + NAD(+) = dihydroxyacetone phosphate + NADH + H(+). The enzyme catalyses sn-glycerol 3-phosphate + NADP(+) = dihydroxyacetone phosphate + NADPH + H(+). It participates in membrane lipid metabolism; glycerophospholipid metabolism. In terms of biological role, catalyzes the reduction of the glycolytic intermediate dihydroxyacetone phosphate (DHAP) to sn-glycerol 3-phosphate (G3P), the key precursor for phospholipid synthesis. This chain is Glycerol-3-phosphate dehydrogenase [NAD(P)+], found in Legionella pneumophila (strain Lens).